A 43-amino-acid polypeptide reads, in one-letter code: Potassium channel toxin gamma-KTx 4.1 (43 aa).

Intrachain disulfides connect Cys-5–Cys-23, Cys-11–Cys-34, Cys-20–Cys-39, and Cys-24–Cys-41.

Belongs to the ergtoxin family. Gamma-KTx 4 subfamily. In terms of tissue distribution, expressed by the venom gland.

The protein localises to the secreted. Its function is as follows. Reversibly blocks Kv11/ERG potassium channels. This Centruroides limpidus (Mexican scorpion) protein is Potassium channel toxin gamma-KTx 4.1.